The following is a 330-amino-acid chain: Probable cytosolic iron-sulfur protein assembly protein 1 (330 aa).

WD repeat units follow at residues 12 to 49, 56 to 95, 105 to 144, 151 to 190, 195 to 236, 248 to 286, and 292 to 330; these read LYKE…FTLI, AHKK…DRTF, GHEN…EEYE, EHSQ…WECV, GHEG…EDDQ, VHKR…WKVF, and CHGV…EKAA.

This sequence belongs to the WD repeat CIA1 family. Interacts with NAR1.

It is found in the cytoplasm. The protein resides in the nucleus. Essential component of the cytosolic iron-sulfur (Fe/S) protein assembly machinery. Required for the maturation of extramitochondrial Fe/S proteins. This is Probable cytosolic iron-sulfur protein assembly protein 1 from Saccharomyces cerevisiae (strain YJM789) (Baker's yeast).